The sequence spans 443 residues: Probable glycine dehydrogenase (decarboxylating) subunit 1 (443 aa).

This sequence belongs to the GcvP family. N-terminal subunit subfamily. In terms of assembly, the glycine cleavage system is composed of four proteins: P, T, L and H. In this organism, the P 'protein' is a heterodimer of two subunits.

It catalyses the reaction N(6)-[(R)-lipoyl]-L-lysyl-[glycine-cleavage complex H protein] + glycine + H(+) = N(6)-[(R)-S(8)-aminomethyldihydrolipoyl]-L-lysyl-[glycine-cleavage complex H protein] + CO2. In terms of biological role, the glycine cleavage system catalyzes the degradation of glycine. The P protein binds the alpha-amino group of glycine through its pyridoxal phosphate cofactor; CO(2) is released and the remaining methylamine moiety is then transferred to the lipoamide cofactor of the H protein. In Koribacter versatilis (strain Ellin345), this protein is Probable glycine dehydrogenase (decarboxylating) subunit 1.